Reading from the N-terminus, the 367-residue chain is Aspartate-semialdehyde dehydrogenase (367 aa).

NADP(+) is bound by residues 10-13 (RGMV), 37-38 (TS), and glutamine 73. Residue arginine 102 participates in phosphate binding. Cysteine 135 acts as the Acyl-thioester intermediate in catalysis. Cysteine 135 bears the S-cysteinyl cysteine; in inhibited form mark. Glutamine 162 is a binding site for substrate. NADP(+) contacts are provided by residues 165–169 (SGGGA), arginine 173, and proline 193. Glutamate 241 lines the substrate pocket. Lysine 244 serves as a coordination point for phosphate. Arginine 267 contributes to the substrate binding site. The active-site Proton acceptor is histidine 274. Glutamine 350 contributes to the NADP(+) binding site.

Belongs to the aspartate-semialdehyde dehydrogenase family. Homodimer.

It catalyses the reaction L-aspartate 4-semialdehyde + phosphate + NADP(+) = 4-phospho-L-aspartate + NADPH + H(+). Its pathway is amino-acid biosynthesis; L-lysine biosynthesis via DAP pathway; (S)-tetrahydrodipicolinate from L-aspartate: step 2/4. The protein operates within amino-acid biosynthesis; L-methionine biosynthesis via de novo pathway; L-homoserine from L-aspartate: step 2/3. It participates in amino-acid biosynthesis; L-threonine biosynthesis; L-threonine from L-aspartate: step 2/5. With respect to regulation, is inhibited by L- and D-cystine, and by other cystine derivatives, via the formation of a covalently bound cysteine at the active site Cys-135. Its function is as follows. Catalyzes the NADPH-dependent formation of L-aspartate-semialdehyde (L-ASA) by the reductive dephosphorylation of L-aspartyl-4-phosphate. The sequence is that of Aspartate-semialdehyde dehydrogenase from Escherichia coli (strain K12).